A 453-amino-acid polypeptide reads, in one-letter code: Alpha-glucosidase (453 aa).

3–69 is a binding site for NAD(+); that stretch reads TKIVLVGAGS…LPFIVSATTD (67 aa). Asn149 provides a ligand contact to substrate. A Mn(2+)-binding site is contributed by Cys171. His172 acts as the Proton donor in catalysis. Residue His201 participates in Mn(2+) binding.

Homotetramer. Mn(2+) serves as cofactor. Co(2+) is required as a cofactor. It depends on Ca(2+) as a cofactor. Requires Fe(2+) as cofactor. The cofactor is Mg(2+). Sr(2+) serves as cofactor. Ni(2+) is required as a cofactor. It depends on NAD(+) as a cofactor.

The enzyme catalyses Hydrolysis of terminal, non-reducing (1-&gt;4)-linked alpha-D-glucose residues with release of alpha-D-glucose.. Its pathway is glycan degradation; palatinose degradation. With respect to regulation, is inhibited by EDTA in vitro. In terms of biological role, alpha-glucosidase with broad specificity. Hydrolyzes maltose, palatinose, maltulose, trehalose, trehalulose, turanose, leucrose, sucrose and maltitol. Is not active against alpha-galactosides, e.g. melibiose, and alpha-mannosides. Shows an obligate requirement for an O-alpha-glycosidic linkage, since it is not able to cleave beta-glycosidic bonds (cellobiose, gentiobiose, lactose, sophorose or laminaribiose). Cannot hydrolyze phosphorylated alpha-glucosides derivatives. Seems to be involved in the degradation of palatinose, a sucrose isomer that is formed as a reserve material under conditions of excess carbon availability, sequestered in a form unavailable to competitors such as fungi or the host plant, and whose consumption appears to be postponed until the preferentially metabolized carbon source (e.g. sucrose) is depleted. In Erwinia rhapontici (Pectobacterium rhapontici), this protein is Alpha-glucosidase (palH).